The chain runs to 244 residues: tRNA (guanine-N(1)-)-methyltransferase (244 aa).

S-adenosyl-L-methionine is bound by residues G112 and 131-136; that span reads IGDFIV.

Belongs to the RNA methyltransferase TrmD family. Homodimer.

The protein localises to the cytoplasm. It carries out the reaction guanosine(37) in tRNA + S-adenosyl-L-methionine = N(1)-methylguanosine(37) in tRNA + S-adenosyl-L-homocysteine + H(+). Functionally, specifically methylates guanosine-37 in various tRNAs. The polypeptide is tRNA (guanine-N(1)-)-methyltransferase (Clostridium kluyveri (strain NBRC 12016)).